The chain runs to 104 residues: Flagellar hook-basal body complex protein FliE (104 aa).

This sequence belongs to the FliE family.

Its subcellular location is the bacterial flagellum basal body. The protein is Flagellar hook-basal body complex protein FliE of Escherichia coli O6:K15:H31 (strain 536 / UPEC).